We begin with the raw amino-acid sequence, 116 residues long: Ribosome-binding factor A (116 aa).

The protein belongs to the RbfA family. As to quaternary structure, monomer. Binds 30S ribosomal subunits, but not 50S ribosomal subunits or 70S ribosomes.

The protein localises to the cytoplasm. Its function is as follows. One of several proteins that assist in the late maturation steps of the functional core of the 30S ribosomal subunit. Associates with free 30S ribosomal subunits (but not with 30S subunits that are part of 70S ribosomes or polysomes). Required for efficient processing of 16S rRNA. May interact with the 5'-terminal helix region of 16S rRNA. The protein is Ribosome-binding factor A of Clostridium perfringens (strain 13 / Type A).